Here is a 179-residue protein sequence, read N- to C-terminus: Inosine/xanthosine triphosphatase (179 aa).

Glutamate 71 is a binding site for Mg(2+). 71-72 lines the substrate pocket; sequence EA.

This sequence belongs to the YjjX NTPase family. Homodimer. The cofactor is Mg(2+). Requires Mn(2+) as cofactor.

It catalyses the reaction XTP + H2O = XDP + phosphate + H(+). The catalysed reaction is ITP + H2O = IDP + phosphate + H(+). Functionally, phosphatase that hydrolyzes non-canonical purine nucleotides such as XTP and ITP to their respective diphosphate derivatives. Probably excludes non-canonical purines from DNA/RNA precursor pool, thus preventing their incorporation into DNA/RNA and avoiding chromosomal lesions. The chain is Inosine/xanthosine triphosphatase from Shewanella sp. (strain ANA-3).